Reading from the N-terminus, the 461-residue chain is Acetylornithine aminotransferase, mitochondrial (461 aa).

A disordered region spans residues 36-56 (YATASQLTHPDPTEDSPSGKM). An N6-(pyridoxal phosphate)lysine modification is found at lysine 312.

Belongs to the class-III pyridoxal-phosphate-dependent aminotransferase family. The cofactor is pyridoxal 5'-phosphate.

The protein resides in the mitochondrion matrix. The enzyme catalyses N(2)-acetyl-L-ornithine + 2-oxoglutarate = N-acetyl-L-glutamate 5-semialdehyde + L-glutamate. Its pathway is amino-acid biosynthesis; L-arginine biosynthesis; N(2)-acetyl-L-ornithine from L-glutamate: step 4/4. The polypeptide is Acetylornithine aminotransferase, mitochondrial (arg-8) (Neurospora crassa (strain ATCC 24698 / 74-OR23-1A / CBS 708.71 / DSM 1257 / FGSC 987)).